The chain runs to 500 residues: NAD(P)H-quinone oxidoreductase chain 4, chloroplastic (500 aa).

14 consecutive transmembrane segments (helical) span residues 4–24, 37–57, 84–104, 111–129, 134–154, 167–187, 208–228, 242–262, 272–292, 305–325, 330–350, 386–406, 416–436, and 462–482; these read FPWL…ILFL, LCIC…HFQL, GISI…TLAA, SRVF…IGPF, LLLF…LLSM, FILY…GICL, ALEM…SPII, HYST…YGLV, AHSI…IYAA, IAYS…SIND, GAIL…FLAG, LALP…GILT, ILIT…SLSM, and FFVS…PDFV.

The protein belongs to the complex I subunit 4 family.

Its subcellular location is the plastid. It is found in the chloroplast thylakoid membrane. It carries out the reaction a plastoquinone + NADH + (n+1) H(+)(in) = a plastoquinol + NAD(+) + n H(+)(out). The enzyme catalyses a plastoquinone + NADPH + (n+1) H(+)(in) = a plastoquinol + NADP(+) + n H(+)(out). This Morus indica (Mulberry) protein is NAD(P)H-quinone oxidoreductase chain 4, chloroplastic.